The chain runs to 232 residues: 2-C-methyl-D-erythritol 4-phosphate cytidylyltransferase (232 aa).

Belongs to the IspD/TarI cytidylyltransferase family. IspD subfamily.

It carries out the reaction 2-C-methyl-D-erythritol 4-phosphate + CTP + H(+) = 4-CDP-2-C-methyl-D-erythritol + diphosphate. It participates in isoprenoid biosynthesis; isopentenyl diphosphate biosynthesis via DXP pathway; isopentenyl diphosphate from 1-deoxy-D-xylulose 5-phosphate: step 2/6. In terms of biological role, catalyzes the formation of 4-diphosphocytidyl-2-C-methyl-D-erythritol from CTP and 2-C-methyl-D-erythritol 4-phosphate (MEP). The sequence is that of 2-C-methyl-D-erythritol 4-phosphate cytidylyltransferase from Deinococcus radiodurans (strain ATCC 13939 / DSM 20539 / JCM 16871 / CCUG 27074 / LMG 4051 / NBRC 15346 / NCIMB 9279 / VKM B-1422 / R1).